The sequence spans 133 residues: Type VI secretion amidase effector 2 protein (133 aa).

Residues C23 and H73 contribute to the active site.

This sequence belongs to the cell wall amidase Dae2/Tae2-like family.

The protein resides in the host periplasm. The protein localises to the secreted. It functions in the pathway cell wall degradation; peptidoglycan degradation. Its function is as follows. Toxic component of a contact-dependent interbacterial competition system (also called effector-immunity systems). Secreted by the SPI-6 type VI secretion system, probably into the periplasm of bacterial target cells. A cell wall amidase with specificity toward the D-meso-DAP-D-alanine bond (D-meso-diaminopimelic-D-alanine) found in peptidoglycan of Gram-negative bacteria. Toxicity is counteracted by a cognate immunity protein Tai2 (t2585), but not immunity proteins associated with a similar endopeptidase in other bacteria. In vitro degrades peptidoglycans from Gram-negative but not Gram-positive bacteria. The sequence is that of Type VI secretion amidase effector 2 protein from Salmonella typhi.